Consider the following 224-residue polypeptide: Heme response regulator HssR (224 aa).

One can recognise a Response regulatory domain in the interval 3 to 116; the sequence is KCLIVDDDYK…ELLFRIQAVL (114 aa). Aspartate 52 carries the post-translational modification 4-aspartylphosphate. Residues 124 to 222 constitute a DNA-binding region (ompR/PhoB-type); sequence QDIIKLGNVT…VRGQGYRVIT (99 aa).

Post-translationally, phosphorylated by HssS.

Its subcellular location is the cytoplasm. Member of the two-component regulatory system HssS/HssR involved in intracellular heme homeostasis and tempering of staphylococcal virulence. Phosphorylated HssR binds to a direct repeat sequence within hrtAB promoter and activates the expression of hrtAB, an efflux pump, in response to extracellular heme, hemin, hemoglobin or blood. The chain is Heme response regulator HssR (hssR) from Staphylococcus haemolyticus (strain JCSC1435).